The following is a 425-amino-acid chain: Bifunctional phosphoribosylaminoimidazole carboxylase/phosphoribosylaminoimidazole succinocarboxamide synthetase (425 aa).

Residue Ala-2 is modified to N-acetylalanine. Residues 2–260 (ATAEVLNIGK…WVAERVELLL (259 aa)) are SAICAR synthetase domain. Tyr-22 bears the Phosphotyrosine mark. The residue at position 27 (Ser-27) is a Phosphoserine. The residue at position 36 (Lys-36) is an N6-acetyllysine. Ser-107 is modified (phosphoserine). Thr-238 carries the phosphothreonine modification. The residue at position 247 (Lys-247) is an N6-acetyllysine. The linker stretch occupies residues 261–266 (KSESQC). The tract at residues 267 to 425 (RVVVLMGSTS…ADKKIRECNL (159 aa)) is AIR carboxylase domain. Ser-274 is subject to Phosphoserine. Ser-332 contributes to the CO2 binding site.

This sequence in the N-terminal section; belongs to the SAICAR synthetase family. The protein in the C-terminal section; belongs to the AIR carboxylase family. Class II subfamily. As to quaternary structure, homooctamer.

The catalysed reaction is 5-amino-1-(5-phospho-D-ribosyl)imidazole-4-carboxylate + L-aspartate + ATP = (2S)-2-[5-amino-1-(5-phospho-beta-D-ribosyl)imidazole-4-carboxamido]succinate + ADP + phosphate + 2 H(+). It carries out the reaction 5-amino-1-(5-phospho-D-ribosyl)imidazole-4-carboxylate + H(+) = 5-amino-1-(5-phospho-beta-D-ribosyl)imidazole + CO2. The protein operates within purine metabolism; IMP biosynthesis via de novo pathway; 5-amino-1-(5-phospho-D-ribosyl)imidazole-4-carboxamide from 5-amino-1-(5-phospho-D-ribosyl)imidazole-4-carboxylate: step 1/2. It participates in purine metabolism; IMP biosynthesis via de novo pathway; 5-amino-1-(5-phospho-D-ribosyl)imidazole-4-carboxylate from 5-amino-1-(5-phospho-D-ribosyl)imidazole (carboxylase route): step 1/1. Bifunctional phosphoribosylaminoimidazole carboxylase and phosphoribosylaminoimidazole succinocarboxamide synthetase catalyzing two reactions of the de novo purine biosynthetic pathway. The protein is Bifunctional phosphoribosylaminoimidazole carboxylase/phosphoribosylaminoimidazole succinocarboxamide synthetase of Homo sapiens (Human).